Reading from the N-terminus, the 193-residue chain is Interleukin-18-binding protein (193 aa).

The signal sequence occupies residues 1–28; sequence MTMRHCWTAGPSSWWVLLLYVHVILARA. An Ig-like C2-type domain is found at 60–161; sequence PALDVIWPEK…QVAQYHIILA (102 aa). Residues Asn74, Asn98, Asn120, and Asn142 are each glycosylated (N-linked (GlcNAc...) asparagine). Cysteines 81 and 145 form a disulfide. Residues 172-185 are compositionally biased toward polar residues; that stretch reads SPSQETLSSHSPVS. Residues 172–193 form a disordered region; sequence SPSQETLSSHSPVSRSAGPGVA.

The protein localises to the secreted. Binds to IL-18 and inhibits its activity. Functions as an inhibitor of the early TH1 cytokine response. This Mus musculus (Mouse) protein is Interleukin-18-binding protein (Il18bp).